Here is a 357-residue protein sequence, read N- to C-terminus: MPSYLVETPQRCYSAIVERGIIGQTAQYLPPKTGKVFVVTTADVWKHAGAPLKAALAGIPFEILNLPGGEDQKRLAPVEALAEEMVQRGADRSSMVIAYGGGIVTDMGGFLAAIFMRGIPVLQIPTTLLAQVDAAIGGKTGVNLVSGKNLIGSFHQPLAVLTDPAILDSLPEREYRAGLWEIIKAGIIREVELFDYLSESRADVLARKPEAVDHIIAESVRMKAEVVSSDEREGDMRRILNFGHTFGHALEAETEYKRLLHGEAVAWGMRAAIYLGESTGYVSAEDSVDMLQMIEDYGPIPSLAGIRAENLLARLVHDKKTVQGKVHFVLPVRIGEVTVVSGIEEPLVFEAMRSALA.

Residues 126-127, Lys-139, and Lys-148 each bind NAD(+); that span reads TT. Glu-181, His-244, and His-261 together coordinate Zn(2+).

It belongs to the sugar phosphate cyclases superfamily. Dehydroquinate synthase family. The cofactor is Co(2+). Requires Zn(2+) as cofactor. NAD(+) serves as cofactor.

The protein localises to the cytoplasm. The enzyme catalyses 7-phospho-2-dehydro-3-deoxy-D-arabino-heptonate = 3-dehydroquinate + phosphate. It functions in the pathway metabolic intermediate biosynthesis; chorismate biosynthesis; chorismate from D-erythrose 4-phosphate and phosphoenolpyruvate: step 2/7. Functionally, catalyzes the conversion of 3-deoxy-D-arabino-heptulosonate 7-phosphate (DAHP) to dehydroquinate (DHQ). The polypeptide is 3-dehydroquinate synthase (Solibacter usitatus (strain Ellin6076)).